The sequence spans 298 residues: Rhodomycin D methylesterase DauP (298 aa).

The AB hydrolase-1 domain maps to 25-277; sequence PLLLIAGGNL…VEIENMGHAL (253 aa).

This sequence belongs to the methyl esterase DnrP family.

The catalysed reaction is rhodomycin D + H2O = 10-carboxy-13-deoxycarminomycin + methanol + H(+). The enzyme catalyses 4-O-methylrhodomycin D + H2O = 10-carboxy-13-deoxydaunorubicin + methanol + H(+). Its pathway is antibiotic biosynthesis; daunorubicin biosynthesis. It participates in antibiotic biosynthesis; carminomycin biosynthesis. Involved in the biosynthesis of the anthracyclines carminomycin and daunorubicin (daunomycin) which are aromatic polyketide antibiotics that exhibit high cytotoxicity and are widely applied in the chemotherapy of a variety of cancers. Catalyzes the removal of methyl group from the carbomethoxy group of rhodomycin D (10-carbomethoxy-13-deoxycarminomycin) and 4-O-methylrhodomycin D to yield 10-carboxy-13-deoxycarminomycin and 10-carboxy-13-deoxydaunorubicin, respectively. Could be also involved in the decarboxylation of 10-carboxy-13-deoxycarminomycin and 10-carboxy-13-deoxydaunorubicin to yield 13-deoxycarminomycin and 13-deoxydaunorubicin, respectively. It seems that DauK may influence the ability of DauP to carry out the decarboxylation. The sequence is that of Rhodomycin D methylesterase DauP (dauP) from Streptomyces sp. (strain C5).